The sequence spans 314 residues: Aspartate carbamoyltransferase catalytic subunit (314 aa).

Carbamoyl phosphate-binding residues include R58 and T59. K86 is an L-aspartate binding site. Residues R108, H136, and Q139 each coordinate carbamoyl phosphate. Positions 169 and 223 each coordinate L-aspartate. Residues G264 and P265 each coordinate carbamoyl phosphate.

This sequence belongs to the aspartate/ornithine carbamoyltransferase superfamily. ATCase family. Heterododecamer (2C3:3R2) of six catalytic PyrB chains organized as two trimers (C3), and six regulatory PyrI chains organized as three dimers (R2).

The catalysed reaction is carbamoyl phosphate + L-aspartate = N-carbamoyl-L-aspartate + phosphate + H(+). It participates in pyrimidine metabolism; UMP biosynthesis via de novo pathway; (S)-dihydroorotate from bicarbonate: step 2/3. In terms of biological role, catalyzes the condensation of carbamoyl phosphate and aspartate to form carbamoyl aspartate and inorganic phosphate, the committed step in the de novo pyrimidine nucleotide biosynthesis pathway. In Roseobacter denitrificans (strain ATCC 33942 / OCh 114) (Erythrobacter sp. (strain OCh 114)), this protein is Aspartate carbamoyltransferase catalytic subunit.